The chain runs to 265 residues: Orotidine 5'-phosphate decarboxylase (265 aa).

Substrate contacts are provided by residues Asp37, 59-61 (KTH), 91-100 (DRKFADIGNT), Tyr217, and Arg236. The active-site Proton donor is Lys93.

The protein belongs to the OMP decarboxylase family.

The catalysed reaction is orotidine 5'-phosphate + H(+) = UMP + CO2. It functions in the pathway pyrimidine metabolism; UMP biosynthesis via de novo pathway; UMP from orotate: step 2/2. The sequence is that of Orotidine 5'-phosphate decarboxylase (URA3) from Saccharomycopsis fibuligera (Yeast).